The sequence spans 119 residues: Holo-[acyl-carrier-protein] synthase (119 aa).

Mg(2+) is bound by residues Asp8 and Glu59.

Belongs to the P-Pant transferase superfamily. AcpS family. It depends on Mg(2+) as a cofactor.

Its subcellular location is the cytoplasm. The enzyme catalyses apo-[ACP] + CoA = holo-[ACP] + adenosine 3',5'-bisphosphate + H(+). Transfers the 4'-phosphopantetheine moiety from coenzyme A to a Ser of acyl-carrier-protein. This chain is Holo-[acyl-carrier-protein] synthase, found in Staphylococcus aureus (strain USA300).